A 470-amino-acid chain; its full sequence is V-type proton ATPase subunit S1 (470 aa).

A signal peptide spans 1 to 41 (MMAAMATARVRMGPRCAQALWRMPWLPVFLSLAAAAAAAAA). Positions 42–231 (EQQVPLVLWS…TAVRPSRVAR (190 aa)) are excised as a propeptide. The Lumenal portion of the chain corresponds to 42–419 (EQQVPLVLWS…EQFSYASDCA (378 aa)). Residues Asn-170, Asn-261, Asn-273, Asn-296, Asn-303, Asn-350, and Asn-357 are each glycosylated (N-linked (GlcNAc...) asparagine). Cys-371 and Cys-418 form a disulfide bridge. The chain crosses the membrane as a helical span at residues 420 to 440 (SFFSPGIWMGLLTSLFMLFIF). Residues 441 to 470 (TYGLHMILSLKTMDRFDDHKGPTISLTQIV) are Cytoplasmic-facing. Ser-465 is modified (phosphoserine).

It belongs to the vacuolar ATPase subunit S1 family. Accessory component of the multisubunit proton-transporting vacuolar (V)-ATPase protein pump. Interacts (via N-terminus) with ATP6AP2 (via N-terminus). Interacts with RNASEK. Interacts with TMEM106B (via C-terminus). N-glycosylated. In terms of tissue distribution, widely expressed, with highest levels in brain and lowest in liver and duodenum.

The protein resides in the endoplasmic reticulum membrane. It localises to the endoplasmic reticulum-Golgi intermediate compartment membrane. The protein localises to the cytoplasmic vesicle. It is found in the secretory vesicle. Its subcellular location is the synaptic vesicle membrane. The protein resides in the clathrin-coated vesicle membrane. Functionally, accessory subunit of the proton-transporting vacuolar (V)-ATPase protein pump, which is required for luminal acidification of secretory vesicles. Guides the V-type ATPase into specialized subcellular compartments, such as neuroendocrine regulated secretory vesicles or the ruffled border of the osteoclast, thereby regulating its activity. Involved in membrane trafficking and Ca(2+)-dependent membrane fusion. May play a role in the assembly of the V-type ATPase complex. In aerobic conditions, involved in intracellular iron homeostasis, thus triggering the activity of Fe(2+) prolyl hydroxylase (PHD) enzymes, and leading to HIF1A hydroxylation and subsequent proteasomal degradation. In islets of Langerhans cells, may regulate the acidification of dense-core secretory granules. The chain is V-type proton ATPase subunit S1 (ATP6AP1) from Homo sapiens (Human).